Here is a 229-residue protein sequence, read N- to C-terminus: Urease accessory protein UreF (229 aa).

Belongs to the UreF family. In terms of assembly, ureD, UreF and UreG form a complex that acts as a GTP-hydrolysis-dependent molecular chaperone, activating the urease apoprotein by helping to assemble the nickel containing metallocenter of UreC. The UreE protein probably delivers the nickel.

The protein resides in the cytoplasm. Its function is as follows. Required for maturation of urease via the functional incorporation of the urease nickel metallocenter. This Staphylococcus saprophyticus subsp. saprophyticus (strain ATCC 15305 / DSM 20229 / NCIMB 8711 / NCTC 7292 / S-41) protein is Urease accessory protein UreF.